The chain runs to 459 residues: Argininosuccinate lyase (459 aa).

Belongs to the lyase 1 family. Argininosuccinate lyase subfamily.

The protein localises to the cytoplasm. It catalyses the reaction 2-(N(omega)-L-arginino)succinate = fumarate + L-arginine. The protein operates within amino-acid biosynthesis; L-arginine biosynthesis; L-arginine from L-ornithine and carbamoyl phosphate: step 3/3. This Prochlorococcus marinus (strain MIT 9515) protein is Argininosuccinate lyase.